Here is a 69-residue protein sequence, read N- to C-terminus: Regulatory protein MokC (69 aa).

A helical membrane pass occupies residues 24–44; sequence KAMIVALIVICITAVVAALVT.

Belongs to the Hok/Gef family.

The protein localises to the cell inner membrane. In terms of biological role, might be the toxic component of a type I toxin-antitoxin (TA) system. Regulatory peptide which completely overlaps hokC and enables hokC expression. The chain is Regulatory protein MokC (mokC) from Escherichia coli (strain K12).